The following is a 280-amino-acid chain: MEESDIYYWKGVAVRMAEQVERAVSPLVGTEDAGEIIKMGADGTPTKLIDLVAEDEAVGVLESTGRPVTIISEEIGVLHINSEGDEPGIIFVVDPLDGTSNAIRNIPFYGISVAVAERHPDGAAPTLNNVLMGFVKNFATGDLYWAIKGQGAFLNEKAISSSSQSSLDRTSLGAFIYGTRFRRVDSICRVIRRMRILGSVALELAYVASGSYDAFMDLRENLRIVDIAASKLIVEEAGGVVTNERGGEIDGLLNVKARTSLVAAGNLELHEKIMQTLEVI.

Mg(2+) is bound by residues Glu73, Asp94, Leu96, and Asp97. Substrate contacts are provided by residues 97 to 99 (DGT), Arg195, Val200, and Arg219. Asp226 lines the Mg(2+) pocket.

It belongs to the inositol monophosphatase superfamily. FBPase class 4 family. Mg(2+) is required as a cofactor.

It carries out the reaction beta-D-fructose 1,6-bisphosphate + H2O = beta-D-fructose 6-phosphate + phosphate. It catalyses the reaction a myo-inositol phosphate + H2O = myo-inositol + phosphate. Phosphatase with broad specificity; it can dephosphorylate fructose 1,6-bisphosphate, and both D and L isomers of inositol-1-phosphate (I-1-P). In Methanothermobacter thermautotrophicus (strain ATCC 29096 / DSM 1053 / JCM 10044 / NBRC 100330 / Delta H) (Methanobacterium thermoautotrophicum), this protein is Fructose-1,6-bisphosphatase/inositol-1-monophosphatase (suhB).